A 556-amino-acid polypeptide reads, in one-letter code: Outer spore wall assembly protein SHE10 (556 aa).

The N-terminal stretch at M1–A21 is a signal peptide. Residues N135–T201 are a coiled coil. A compositionally biased stretch (basic and acidic residues) spans E190–K208. Disordered regions lie at residues E190 to T263 and R534 to A556. The segment covering I220–K244 has biased composition (low complexity). Residues S245 to T256 are compositionally biased toward basic and acidic residues. Residues K481–E547 are a coiled coil.

It belongs to the SHE10 family. As to quaternary structure, component of the mitochondria-localized RNase mitochondrial RNA-processing (RNase MRP) composed of one single RNA encoded by the NME1 gene and at least 31 proteins. Absent in the nucleus-localized RNase MRP (NuMRP).

The protein localises to the mitochondrion. Its function is as follows. Involved in spore wall assembly. May be a component of the mitochondrial RNase MRP (MtMRP), a ribonucleoprotein endoribonuclease involved in the cleaving RNA transcripts to generate primers for DNA replication in mitochondria. This is Outer spore wall assembly protein SHE10 from Candida glabrata (strain ATCC 2001 / BCRC 20586 / JCM 3761 / NBRC 0622 / NRRL Y-65 / CBS 138) (Yeast).